The sequence spans 922 residues: Alpha-actinin, sarcomeric (922 aa).

The tract at residues M1–H252 is actin-binding. Calponin-homology (CH) domains lie at K36–A140 and M149–Q255. Spectrin repeat units lie at residues A253 to D393, I394 to R508, I509 to L629, and I630 to T742. 2 EF-hand domains span residues E776–S811 and Q817–D852. The Ca(2+) site is built by D789, N791, T793, R795, and E800.

Belongs to the alpha-actinin family. As to quaternary structure, homodimer; antiparallel.

Its function is as follows. F-actin cross-linking protein which is thought to anchor actin to a variety of intracellular structures. This is a bundling protein. The chain is Alpha-actinin, sarcomeric (Actn) from Anopheles gambiae (African malaria mosquito).